A 360-amino-acid polypeptide reads, in one-letter code: DAZ-associated protein 1 (360 aa).

RRM domains follow at residues 10–97 and 114–191; these read GKLF…RSRP and NKIF…RAEP. Disordered stretches follow at residues 73-116 and 184-345; these read HTLD…SNKI and VEVK…DFPF. Composition is skewed to basic and acidic residues over residues 91-112 and 184-195; these read QPER…ENSR and VEVKRAEPRDSK. The segment covering 203-231 has biased composition (polar residues); it reads GSNQWGSRAMQSTANGWTGQPPQTWQGYS. The span at 242–253 shows a compositional bias: gly residues; it reads TIGGYGQPAGRG. The segment covering 271-301 has biased composition (pro residues); sequence GPFPPPQGFPPGYATPPPFGYGYGPPPPPPD. A compositionally biased stretch (polar residues) spans 328-345; it reads QSAQDLSKPPSGQQDFPF.

Component of a mRNP complex, at least composed of DAZAP1, IGF2BP3-A, STAU and VgRBP60. Binds to the 3'-UTR of Vg1 mRNA. Interacts with profilin, a protein involved in actin assembly. Interacts with VgRBP71. As to expression, expressed in oocytes.

The protein localises to the cytoplasm. Its function is as follows. RNA-binding protein, which is required during gametogenesis. May be involved in the actin-dependent anchoring of Vg1 mRNA in the vegetal cortex of the oocyte. The protein is DAZ-associated protein 1 (dazap1) of Xenopus laevis (African clawed frog).